The sequence spans 468 residues: Glutamate--tRNA ligase (468 aa).

The short motif at 9–19 (PSPTGSIHIGN) is the 'HIGH' region element. The 'KMSKS' region motif lies at 239-243 (KLSKR). Position 242 (K242) interacts with ATP.

The protein belongs to the class-I aminoacyl-tRNA synthetase family. Glutamate--tRNA ligase type 1 subfamily. In terms of assembly, monomer.

It is found in the cytoplasm. The enzyme catalyses tRNA(Glu) + L-glutamate + ATP = L-glutamyl-tRNA(Glu) + AMP + diphosphate. Functionally, catalyzes the attachment of glutamate to tRNA(Glu) in a two-step reaction: glutamate is first activated by ATP to form Glu-AMP and then transferred to the acceptor end of tRNA(Glu). The polypeptide is Glutamate--tRNA ligase (Blochmanniella pennsylvanica (strain BPEN)).